Reading from the N-terminus, the 254-residue chain is uncharacterized protein (254 aa).

Residues valine 7 and asparagine 85 each coordinate NADP(+). Serine 136 functions as the Proton donor in the catalytic mechanism. Residues tyrosine 150, lysine 154, valine 181, and threonine 183 each coordinate NADP(+). The active-site Proton acceptor is tyrosine 150. Lysine 154 acts as the Lowers pKa of active site Tyr in catalysis.

The protein belongs to the short-chain dehydrogenases/reductases (SDR) family.

This is an uncharacterized protein from Saccharomyces cerevisiae (strain ATCC 204508 / S288c) (Baker's yeast).